Consider the following 472-residue polypeptide: Cell division protein FtsP (472 aa).

The tat-type signal signal peptide spans 1-32 (MSLSRRRFIQASGLALCAGGLPLQARASGAQA).

The protein belongs to the FtsP family. Predicted to be exported by the Tat system. The position of the signal peptide cleavage has not been experimentally proven.

The protein localises to the periplasm. Its function is as follows. Cell division protein that is required for growth during stress conditions. May be involved in protecting or stabilizing the divisomal assembly under conditions of stress. The sequence is that of Cell division protein FtsP from Edwardsiella tarda (strain FL6-60).